Consider the following 306-residue polypeptide: ADP-polyphosphate phosphotransferase 2 (306 aa).

The protein belongs to the polyphosphate kinase 2 (PPK2) family. Class I subfamily.

The enzyme catalyses [phosphate](n) + ATP = [phosphate](n+1) + ADP. It catalyses the reaction [phosphate](n) + GTP = [phosphate](n+1) + GDP. Its function is as follows. Uses inorganic polyphosphate (polyP) as a donor to convert ADP to ATP. Can also convert GDP to GTP, with lower efficiency. The polypeptide is ADP-polyphosphate phosphotransferase 2 (Rhizobium meliloti (strain 1021) (Ensifer meliloti)).